The primary structure comprises 374 residues: N5-carboxyaminoimidazole ribonucleotide synthase (374 aa).

ATP contacts are provided by residues arginine 108, lysine 148, glycine 153–glutamine 159, glutamate 183–leucine 186, glutamate 191, histidine 214, and asparagine 266–glutamate 267. Residues lysine 112–threonine 296 enclose the ATP-grasp domain.

Belongs to the PurK/PurT family. As to quaternary structure, homodimer.

It carries out the reaction 5-amino-1-(5-phospho-beta-D-ribosyl)imidazole + hydrogencarbonate + ATP = 5-carboxyamino-1-(5-phospho-D-ribosyl)imidazole + ADP + phosphate + 2 H(+). Its pathway is purine metabolism; IMP biosynthesis via de novo pathway; 5-amino-1-(5-phospho-D-ribosyl)imidazole-4-carboxylate from 5-amino-1-(5-phospho-D-ribosyl)imidazole (N5-CAIR route): step 1/2. In terms of biological role, catalyzes the ATP-dependent conversion of 5-aminoimidazole ribonucleotide (AIR) and HCO(3)(-) to N5-carboxyaminoimidazole ribonucleotide (N5-CAIR). In Staphylococcus aureus (strain MSSA476), this protein is N5-carboxyaminoimidazole ribonucleotide synthase.